The primary structure comprises 448 residues: Histidinol dehydrogenase (448 aa).

Positions 136, 197, and 220 each coordinate NAD(+). 3 residues coordinate substrate: serine 243, glutamine 265, and histidine 268. Zn(2+)-binding residues include glutamine 265 and histidine 268. Catalysis depends on proton acceptor residues glutamate 333 and histidine 334. Positions 334, 367, 421, and 426 each coordinate substrate. Aspartate 367 is a binding site for Zn(2+). Residue histidine 426 coordinates Zn(2+).

This sequence belongs to the histidinol dehydrogenase family. It depends on Zn(2+) as a cofactor.

It catalyses the reaction L-histidinol + 2 NAD(+) + H2O = L-histidine + 2 NADH + 3 H(+). It functions in the pathway amino-acid biosynthesis; L-histidine biosynthesis; L-histidine from 5-phospho-alpha-D-ribose 1-diphosphate: step 9/9. Functionally, catalyzes the sequential NAD-dependent oxidations of L-histidinol to L-histidinaldehyde and then to L-histidine. The protein is Histidinol dehydrogenase of Pseudomonas syringae pv. syringae (strain B728a).